The chain runs to 314 residues: Dihydroorotate dehydrogenase (fumarate) (314 aa).

Residues alanine 21 and 45–46 (KS) contribute to the FMN site. Substrate contacts are provided by residues lysine 45, 69–73 (NSMGL), and asparagine 129. Asparagine 129 is an FMN binding site. The Nucleophile role is filled by cysteine 132. Asparagine 134 provides a ligand contact to substrate. FMN contacts are provided by lysine 166 and valine 195. Residue 196–197 (NS) coordinates substrate. Residues glycine 224, 251-252 (GG), and 273-274 (GT) contribute to the FMN site.

The protein belongs to the dihydroorotate dehydrogenase family. Type 1 subfamily. In terms of assembly, homodimer. Requires FMN as cofactor.

It localises to the cytoplasm. The catalysed reaction is (S)-dihydroorotate + fumarate = orotate + succinate. It participates in pyrimidine metabolism; UMP biosynthesis via de novo pathway. Its function is as follows. Catalyzes the conversion of dihydroorotate to orotate with fumarate as the electron acceptor. Molecular oxygen can replace fumarate in vitro. This chain is Dihydroorotate dehydrogenase (fumarate) (pyr4), found in Trypanosoma cruzi (strain CL Brener).